The sequence spans 293 residues: Cell adhesion molecule CEACAM21 (293 aa).

The N-terminal stretch at 1–34 (MGPPSACPHRECIPWQGLLLTASLLTFWNAPTTA) is a signal peptide. The Extracellular portion of the chain corresponds to 35 to 240 (WLFIASAPFE…TVKSDDNTLG (206 aa)). Asn111 carries N-linked (GlcNAc...) asparagine glycosylation. The region spanning 147–231 (PSIQASSTTV…SNRSDPLKLT (85 aa)) is the Ig-like C2-type domain. An intrachain disulfide couples Cys166 to Cys214. A helical membrane pass occupies residues 241-261 (ILIGVLVGSLLVAALVCFLLL). Topologically, residues 262–293 (RKTGRASDQSDFREQQPPASTPGHGPSDSSIS) are cytoplasmic. Residues 267–293 (ASDQSDFREQQPPASTPGHGPSDSSIS) are disordered.

Belongs to the immunoglobulin superfamily. CEA family.

It localises to the membrane. This Homo sapiens (Human) protein is Cell adhesion molecule CEACAM21.